A 438-amino-acid polypeptide reads, in one-letter code: Dolichyl-diphosphooligosaccharide--protein glycosyltransferase 48 kDa subunit (438 aa).

Positions 1 to 25 (MASLRLSVLLVSVSWLLLLVSGLRA) are cleaved as a signal peptide. Residues 26–408 (GPRTLVLMEN…QYERFIPSAY (383 aa)) are Lumenal-facing. The helical transmembrane segment at 409–429 (PYYASAFSVMFGLFIFSIVFL) threads the bilayer. The Cytoplasmic portion of the chain corresponds to 430 to 438 (HMKEKEKSD).

It belongs to the DDOST 48 kDa subunit family. As to quaternary structure, component of the oligosaccharyltransferase (OST) complex.

The protein resides in the endoplasmic reticulum membrane. It participates in protein modification; protein glycosylation. Subunit of the oligosaccharyl transferase (OST) complex that catalyzes the initial transfer of a defined glycan (Glc(3)Man(9)GlcNAc(2) in eukaryotes) from the lipid carrier dolichol-pyrophosphate to an asparagine residue within an Asn-X-Ser/Thr consensus motif in nascent polypeptide chains, the first step in protein N-glycosylation. N-glycosylation occurs cotranslationally and the complex associates with the Sec61 complex at the channel-forming translocon complex that mediates protein translocation across the endoplasmic reticulum (ER). All subunits are required for a maximal enzyme activity. Required for the assembly of both SST3A- and SS3B-containing OST complexes. The sequence is that of Dolichyl-diphosphooligosaccharide--protein glycosyltransferase 48 kDa subunit from Xenopus laevis (African clawed frog).